The following is a 107-amino-acid chain: Ribonuclease P protein component 4 (107 aa).

4 residues coordinate Zn(2+): Cys-66, Cys-69, Cys-92, and Cys-95.

It belongs to the eukaryotic/archaeal RNase P protein component 4 family. As to quaternary structure, consists of a catalytic RNA component and at least 4-5 protein subunits. Zn(2+) is required as a cofactor.

The protein localises to the cytoplasm. It catalyses the reaction Endonucleolytic cleavage of RNA, removing 5'-extranucleotides from tRNA precursor.. Part of ribonuclease P, a protein complex that generates mature tRNA molecules by cleaving their 5'-ends. This is Ribonuclease P protein component 4 from Methanosarcina mazei (strain ATCC BAA-159 / DSM 3647 / Goe1 / Go1 / JCM 11833 / OCM 88) (Methanosarcina frisia).